The sequence spans 477 residues: Putative 4-(hydroxymethyl)benzenesulfonate dehydrogenase TsaD2 (477 aa).

Residues 154–155, 178–181, and 230–231 contribute to the NAD(+) site; these read WN, KAAE, and GS. The active-site Proton acceptor is Glu-252. Leu-253 contacts NAD(+). The active-site Nucleophile is the Cys-286. Glu-381 lines the NAD(+) pocket.

The protein belongs to the aldehyde dehydrogenase family. As to quaternary structure, homodimer.

It catalyses the reaction 4-(hydroxymethyl)benzenesulfonate + NAD(+) = 4-formylbenzenesulfonate + NADH + H(+). Its function is as follows. Involved in the toluene-4-sulfonate degradation pathway. Does not discriminate between the sulfonate and the carboxyl substituents and can also be involved in the p-toluenecarboxylate degradation pathway. This is Putative 4-(hydroxymethyl)benzenesulfonate dehydrogenase TsaD2 (tsaD2) from Comamonas testosteroni (Pseudomonas testosteroni).